Here is a 176-residue protein sequence, read N- to C-terminus: NAD(P)H-quinone oxidoreductase subunit 6, chloroplastic (176 aa).

The next 5 membrane-spanning stretches (helical) occupy residues 10-30 (FLLVFLGSGLILGGLGVVLLP), 32-52 (PIYSAFSLGLVLICTSLFYIL), 61-81 (AQLLIYVGAINVLIIFAVMFM), 92-112 (LWTVGDGITSMVCISLFISLI), and 152-172 (FFLPFELISIILLVALIGAIA).

This sequence belongs to the complex I subunit 6 family. As to quaternary structure, NDH is composed of at least 16 different subunits, 5 of which are encoded in the nucleus.

The protein resides in the plastid. It is found in the chloroplast thylakoid membrane. The catalysed reaction is a plastoquinone + NADH + (n+1) H(+)(in) = a plastoquinol + NAD(+) + n H(+)(out). It catalyses the reaction a plastoquinone + NADPH + (n+1) H(+)(in) = a plastoquinol + NADP(+) + n H(+)(out). In terms of biological role, NDH shuttles electrons from NAD(P)H:plastoquinone, via FMN and iron-sulfur (Fe-S) centers, to quinones in the photosynthetic chain and possibly in a chloroplast respiratory chain. The immediate electron acceptor for the enzyme in this species is believed to be plastoquinone. Couples the redox reaction to proton translocation, and thus conserves the redox energy in a proton gradient. This is NAD(P)H-quinone oxidoreductase subunit 6, chloroplastic (ndhG) from Solanum tuberosum (Potato).